Here is a 480-residue protein sequence, read N- to C-terminus: Proline--tRNA ligase (480 aa).

It belongs to the class-II aminoacyl-tRNA synthetase family. ProS type 3 subfamily. Homodimer.

Its subcellular location is the cytoplasm. It catalyses the reaction tRNA(Pro) + L-proline + ATP = L-prolyl-tRNA(Pro) + AMP + diphosphate. Functionally, catalyzes the attachment of proline to tRNA(Pro) in a two-step reaction: proline is first activated by ATP to form Pro-AMP and then transferred to the acceptor end of tRNA(Pro). The polypeptide is Proline--tRNA ligase (Alkaliphilus oremlandii (strain OhILAs) (Clostridium oremlandii (strain OhILAs))).